A 218-amino-acid polypeptide reads, in one-letter code: 3,4-dihydroxy-2-butanone 4-phosphate synthase (218 aa).

D-ribulose 5-phosphate contacts are provided by residues 38–39 (RE), Asp-43, 151–155 (RRGHT), and Glu-175. Residue Glu-39 participates in Mg(2+) binding. Mg(2+) is bound at residue His-154.

The protein belongs to the DHBP synthase family. As to quaternary structure, homodimer. Mg(2+) is required as a cofactor. The cofactor is Mn(2+).

The catalysed reaction is D-ribulose 5-phosphate = (2S)-2-hydroxy-3-oxobutyl phosphate + formate + H(+). It functions in the pathway cofactor biosynthesis; riboflavin biosynthesis; 2-hydroxy-3-oxobutyl phosphate from D-ribulose 5-phosphate: step 1/1. Its function is as follows. Catalyzes the conversion of D-ribulose 5-phosphate to formate and 3,4-dihydroxy-2-butanone 4-phosphate. The protein is 3,4-dihydroxy-2-butanone 4-phosphate synthase of Vibrio cholerae serotype O1 (strain ATCC 39541 / Classical Ogawa 395 / O395).